The sequence spans 164 residues: Single-stranded DNA-binding protein 2 (164 aa).

The SSB domain maps to isoleucine 5–glycine 109. The interval methionine 105–phenylalanine 164 is disordered. Over residues arginine 111 to glutamate 122 the composition is skewed to gly residues. An Important for interaction with partner proteins motif is present at residues aspartate 159–phenylalanine 164.

As to quaternary structure, homotetramer.

Its function is as follows. Plays an important role in DNA replication, recombination and repair. Binds to ssDNA and to an array of partner proteins to recruit them to their sites of action during DNA metabolism. This is Single-stranded DNA-binding protein 2 (ssb2) from Xylella fastidiosa (strain 9a5c).